The following is a 215-amino-acid chain: 3-isopropylmalate dehydratase small subunit (215 aa).

This sequence belongs to the LeuD family. LeuD type 1 subfamily. In terms of assembly, heterodimer of LeuC and LeuD.

The catalysed reaction is (2R,3S)-3-isopropylmalate = (2S)-2-isopropylmalate. It functions in the pathway amino-acid biosynthesis; L-leucine biosynthesis; L-leucine from 3-methyl-2-oxobutanoate: step 2/4. Catalyzes the isomerization between 2-isopropylmalate and 3-isopropylmalate, via the formation of 2-isopropylmaleate. This chain is 3-isopropylmalate dehydratase small subunit, found in Stutzerimonas stutzeri (strain A1501) (Pseudomonas stutzeri).